Reading from the N-terminus, the 246-residue chain is Phycocyanobilin:ferredoxin oxidoreductase (246 aa).

Belongs to the HY2 family.

It catalyses the reaction (2R,3Z)-phycocyanobilin + 4 oxidized [2Fe-2S]-[ferredoxin] = biliverdin IXalpha + 4 reduced [2Fe-2S]-[ferredoxin] + 4 H(+). Functionally, catalyzes the four-electron reduction of biliverdin IX-alpha (2-electron reduction at both the A and D rings); the reaction proceeds via an isolatable 2-electron intermediate, 181,182-dihydrobiliverdin. This Synechococcus sp. (strain CC9902) protein is Phycocyanobilin:ferredoxin oxidoreductase.